The following is an 856-amino-acid chain: Alginate lyase 7 (856 aa).

8 PbH1 repeats span residues 133–155 (DYNVTVERVEIREVSRYAFDPHE), 157–179 (TINLTIRDSVAHDNGKDGFVADF), 180–202 (QIGAVFENNVSYNNGRHGFNIVT), 204–226 (SHDIVFTNNVAYGNGANGLVVQR), 234–256 (VYNVEIEGGSFHDNGQEGVLIKM), 257–279 (STDVTLQGAEIYGNGYAGVRVQG), 280–304 (VEDVRILDNYIHDNAQSKANAEVIV), and 320–342 (TQNVTVKGNTIVGSANSTYGIQE). Hemolysin-type calcium-binding repeat units follow at residues 387–402 (GSTGNDLLTGTPIADL), 404–421 (VGGSGNDTLSGDAGNDVL), 422–439 (EGGAGSDRLTGGEGADIF), 538–549 (GTEGDDSLTGNA), 554–563 (LDGGSGNDSL), 565–581 (GGLGNDVLRGGAGDDIL), 582–599 (NGGLGRDQLSGGEGADIF), 715–731 (GGAGRDILNGGAGDDIL), and 733–749 (GGSERDTLTGGSGADVF).

Belongs to the D-mannuronate C5-epimerase family. Ca(2+) serves as cofactor.

Its subcellular location is the secreted. The catalysed reaction is Eliminative cleavage of alginate to give oligosaccharides with 4-deoxy-alpha-L-erythro-hex-4-enuronosyl groups at their non-reducing ends and beta-D-mannuronate at their reducing end.. The enzyme catalyses [(1-&gt;4)-beta-D-mannuronosyl](n) = [alginate](n). It participates in glycan biosynthesis; alginate biosynthesis. Inhibited by zinc. Converts beta-D-mannuronic acid (M) to alpha-L-guluronic acid (G). Has both epimerase and lyase activities. Contributes to abortive encystment by degrading the coat from inside the cyst. Important for cyst germination. The protein is Alginate lyase 7 of Azotobacter vinelandii.